The primary structure comprises 161 residues: SsrA-binding protein (161 aa).

Belongs to the SmpB family.

The protein localises to the cytoplasm. Required for rescue of stalled ribosomes mediated by trans-translation. Binds to transfer-messenger RNA (tmRNA), required for stable association of tmRNA with ribosomes. tmRNA and SmpB together mimic tRNA shape, replacing the anticodon stem-loop with SmpB. tmRNA is encoded by the ssrA gene; the 2 termini fold to resemble tRNA(Ala) and it encodes a 'tag peptide', a short internal open reading frame. During trans-translation Ala-aminoacylated tmRNA acts like a tRNA, entering the A-site of stalled ribosomes, displacing the stalled mRNA. The ribosome then switches to translate the ORF on the tmRNA; the nascent peptide is terminated with the 'tag peptide' encoded by the tmRNA and targeted for degradation. The ribosome is freed to recommence translation, which seems to be the essential function of trans-translation. The chain is SsrA-binding protein from Baumannia cicadellinicola subsp. Homalodisca coagulata.